The sequence spans 1071 residues: Intracellular phospholipase A2 (1071 aa).

Residues methionine 1–proline 22 are disordered. 7 ANK repeats span residues glutamate 411 to cysteine 440, aspartate 479 to arginine 508, aspartate 510 to asparagine 539, leucine 544 to leucine 570, alanine 578 to alanine 610, histidine 614 to leucine 651, and arginine 652 to proline 681. The 174-residue stretch at isoleucine 748–methionine 921 folds into the PNPLA domain. The short motif at glycine 752–glycine 757 is the GXGXXG element. Positions glycine 784 to glycine 788 match the GXSXG motif. The active-site Nucleophile is serine 786. Residue aspartate 908 is the Proton acceptor of the active site. The DGA/G motif lies at aspartate 908–glycine 910.

The protein belongs to the patatin family.

The enzyme catalyses a 1,2-diacyl-sn-glycero-3-phosphocholine + H2O = a 1-acyl-sn-glycero-3-phosphocholine + a fatty acid + H(+). In terms of biological role, phospholipase that plays a critical role during oogenesis, ovulation, and/or embryogenesis. This chain is Intracellular phospholipase A2, found in Caenorhabditis elegans.